A 358-amino-acid polypeptide reads, in one-letter code: Peptide chain release factor 1 (358 aa).

Residue Q236 is modified to N5-methylglutamine.

It belongs to the prokaryotic/mitochondrial release factor family. In terms of processing, methylated by PrmC. Methylation increases the termination efficiency of RF1.

The protein localises to the cytoplasm. In terms of biological role, peptide chain release factor 1 directs the termination of translation in response to the peptide chain termination codons UAG and UAA. The sequence is that of Peptide chain release factor 1 from Corynebacterium efficiens (strain DSM 44549 / YS-314 / AJ 12310 / JCM 11189 / NBRC 100395).